A 603-amino-acid chain; its full sequence is Elongation factor 4 (603 aa).

The tr-type G domain maps to 2-184 (NHIRNFSIIA…AVIARVPPPK (183 aa)). GTP-binding positions include 14–19 (DHGKST) and 131–134 (NKMD).

Belongs to the TRAFAC class translation factor GTPase superfamily. Classic translation factor GTPase family. LepA subfamily.

It is found in the cell inner membrane. The enzyme catalyses GTP + H2O = GDP + phosphate + H(+). Its function is as follows. Required for accurate and efficient protein synthesis under certain stress conditions. May act as a fidelity factor of the translation reaction, by catalyzing a one-codon backward translocation of tRNAs on improperly translocated ribosomes. Back-translocation proceeds from a post-translocation (POST) complex to a pre-translocation (PRE) complex, thus giving elongation factor G a second chance to translocate the tRNAs correctly. Binds to ribosomes in a GTP-dependent manner. The chain is Elongation factor 4 from Polaromonas sp. (strain JS666 / ATCC BAA-500).